The chain runs to 189 residues: 3-hydroxyanthranilate 3,4-dioxygenase (189 aa).

Arginine 50 lines the O2 pocket. The Fe cation site is built by histidine 54, glutamate 60, and histidine 102. Glutamate 60 contributes to the substrate binding site. Substrate-binding residues include arginine 106 and glutamate 116. 4 residues coordinate a divalent metal cation: cysteine 131, cysteine 136, cysteine 170, and cysteine 173.

Belongs to the 3-HAO family. Fe(2+) serves as cofactor.

It localises to the cytoplasm. It carries out the reaction 3-hydroxyanthranilate + O2 = (2Z,4Z)-2-amino-3-carboxymuconate 6-semialdehyde. Its pathway is cofactor biosynthesis; NAD(+) biosynthesis; quinolinate from L-kynurenine: step 3/3. Functionally, catalyzes the oxidative ring opening of 3-hydroxyanthranilate to 2-amino-3-carboxymuconate semialdehyde, which spontaneously cyclizes to quinolinate. The sequence is that of 3-hydroxyanthranilate 3,4-dioxygenase (bna1) from Aspergillus niger (strain ATCC MYA-4892 / CBS 513.88 / FGSC A1513).